Reading from the N-terminus, the 1590-residue chain is Pentafunctional AROM polypeptide (1590 aa).

Residues 1–400 (MSTANGSSPT…HEPKASSVDD (400 aa)) form a 3-dehydroquinate synthase region. Residues 49 to 51 (DTN), 96 to 99 (EGSK), 127 to 129 (GGV), and D132 contribute to the NAD(+) site. R143 provides a ligand contact to 7-phospho-2-dehydro-3-deoxy-D-arabino-heptonate. Position 152–153 (152–153 (TT)) interacts with NAD(+). The 7-phospho-2-dehydro-3-deoxy-D-arabino-heptonate site is built by D159 and K165. K174 is a binding site for NAD(+). N175 is a 7-phospho-2-dehydro-3-deoxy-D-arabino-heptonate binding site. NAD(+)-binding positions include 192 to 195 (FLNT) and N203. E207 serves as a coordination point for Zn(2+). Residues 207-210 (EVIK) and K266 contribute to the 7-phospho-2-dehydro-3-deoxy-D-arabino-heptonate site. The active-site Proton acceptor; for 3-dehydroquinate synthase activity is E276. 7-phospho-2-dehydro-3-deoxy-D-arabino-heptonate contacts are provided by residues 280–284 (RNLLN) and H287. Zn(2+) is bound at residue H287. H291 (proton acceptor; for 3-dehydroquinate synthase activity) is an active-site residue. Residues H303 and K372 each coordinate 7-phospho-2-dehydro-3-deoxy-D-arabino-heptonate. A Zn(2+)-binding site is contributed by H303. The tract at residues 413–856 (VQPGVRPGLK…WDVLSGVFGV (444 aa)) is EPSP synthase. C838 (for EPSP synthase activity) is an active-site residue. The tract at residues 876–1070 (NRSVFVIGMR…KAKPHSFFVS (195 aa)) is shikimate kinase. An ATP-binding site is contributed by 883 to 890 (GMRGAGKS). The tract at residues 1071–1285 (LTVPNITAHT…AAPGQLTAAE (215 aa)) is 3-dehydroquinase. H1187 serves as the catalytic Proton acceptor; for 3-dehydroquinate dehydratase activity. K1215 functions as the Schiff-base intermediate with substrate; for 3-dehydroquinate dehydratase activity in the catalytic mechanism. The segment at 1298-1590 (KRKFYLFGKP…IVMNGTSDSS (293 aa)) is shikimate dehydrogenase.

It in the N-terminal section; belongs to the sugar phosphate cyclases superfamily. Dehydroquinate synthase family. This sequence in the 2nd section; belongs to the EPSP synthase family. The protein in the 3rd section; belongs to the shikimate kinase family. In the 4th section; belongs to the type-I 3-dehydroquinase family. It in the C-terminal section; belongs to the shikimate dehydrogenase family. As to quaternary structure, homodimer. Requires Zn(2+) as cofactor.

The protein resides in the cytoplasm. The enzyme catalyses 7-phospho-2-dehydro-3-deoxy-D-arabino-heptonate = 3-dehydroquinate + phosphate. It catalyses the reaction 3-dehydroquinate = 3-dehydroshikimate + H2O. The catalysed reaction is shikimate + NADP(+) = 3-dehydroshikimate + NADPH + H(+). It carries out the reaction shikimate + ATP = 3-phosphoshikimate + ADP + H(+). The enzyme catalyses 3-phosphoshikimate + phosphoenolpyruvate = 5-O-(1-carboxyvinyl)-3-phosphoshikimate + phosphate. Its pathway is metabolic intermediate biosynthesis; chorismate biosynthesis; chorismate from D-erythrose 4-phosphate and phosphoenolpyruvate: step 2/7. The protein operates within metabolic intermediate biosynthesis; chorismate biosynthesis; chorismate from D-erythrose 4-phosphate and phosphoenolpyruvate: step 3/7. It functions in the pathway metabolic intermediate biosynthesis; chorismate biosynthesis; chorismate from D-erythrose 4-phosphate and phosphoenolpyruvate: step 4/7. It participates in metabolic intermediate biosynthesis; chorismate biosynthesis; chorismate from D-erythrose 4-phosphate and phosphoenolpyruvate: step 5/7. Its pathway is metabolic intermediate biosynthesis; chorismate biosynthesis; chorismate from D-erythrose 4-phosphate and phosphoenolpyruvate: step 6/7. Functionally, the AROM polypeptide catalyzes 5 consecutive enzymatic reactions in prechorismate polyaromatic amino acid biosynthesis. The polypeptide is Pentafunctional AROM polypeptide (Pyricularia oryzae (strain 70-15 / ATCC MYA-4617 / FGSC 8958) (Rice blast fungus)).